The following is a 599-amino-acid chain: Sulfite reductase [NADPH] flavoprotein alpha-component (599 aa).

Residues 64–202 form the Flavodoxin-like domain; the sequence is VTLISASQTG…AASEWRACVV (139 aa). FMN contacts are provided by residues 70–75, 117–120, and 153–162; these read SQTGNA, STQG, and LGDTSYEFFC. The FAD-binding FR-type domain maps to 234–448; sequence DAPLTATLSV…IEHNDNFRLP (215 aa). FAD-binding positions include T322, A356, 386-389, 404-406, Y410, and 419-422; these read RLYS, TVG, and GGAS. Residues 519–520, 525–529, and D561 contribute to the NADP(+) site; these read SR and KIYVQ. FAD is bound at residue Y599.

Belongs to the NADPH-dependent sulphite reductase flavoprotein subunit CysJ family. The protein in the N-terminal section; belongs to the flavodoxin family. This sequence in the C-terminal section; belongs to the flavoprotein pyridine nucleotide cytochrome reductase family. Alpha(8)-beta(8). The alpha component is a flavoprotein, the beta component is a hemoprotein. The cofactor is FAD. FMN serves as cofactor.

It carries out the reaction hydrogen sulfide + 3 NADP(+) + 3 H2O = sulfite + 3 NADPH + 4 H(+). Its pathway is sulfur metabolism; hydrogen sulfide biosynthesis; hydrogen sulfide from sulfite (NADPH route): step 1/1. Its function is as follows. Component of the sulfite reductase complex that catalyzes the 6-electron reduction of sulfite to sulfide. This is one of several activities required for the biosynthesis of L-cysteine from sulfate. The flavoprotein component catalyzes the electron flow from NADPH -&gt; FAD -&gt; FMN to the hemoprotein component. In Salmonella typhi, this protein is Sulfite reductase [NADPH] flavoprotein alpha-component.